A 195-amino-acid polypeptide reads, in one-letter code: Capsid protein (195 aa).

Positions 148–195 are disordered; it reads NAPILSTLPETTVVRRRGRSPRRRTPSPRRRRSQSPRRRRSASPASQC. Residues 161 to 188 show a composition bias toward basic residues; it reads VRRRGRSPRRRTPSPRRRRSQSPRRRRS. Phosphoserine; by host occurs at positions 167, 174, and 182. One copy of the 1; half-length repeat lies at 167–172; that stretch reads SPRRRT. The interval 167-188 is 3 X 7 AA repeats of S-P-R-R-R-[PR]-S; sequence SPRRRTPSPRRRRSQSPRRRRS. The short motif at 170–187 is the Bipartite nuclear localization signal element; it reads RRTPSPRRRRSQSPRRRR. 2 consecutive repeat copies span residues 174–180 and 182–188. Residues 189 to 195 are RNA binding; the sequence is ASPASQC.

Belongs to the orthohepadnavirus core antigen family. In terms of assembly, homodimerizes, then multimerizes. Interacts with cytosol exposed regions of viral L glycoprotein present in the reticulum-to-Golgi compartment. Interacts with human FLNB. Phosphorylated form interacts with host importin alpha; this interaction depends on the exposure of the NLS, which itself depends upon genome maturation and/or phosphorylation of the capsid protein. Interacts with host NUP153. Post-translationally, phosphorylated by host SRPK1, SRPK2, and maybe protein kinase C or GAPDH. Phosphorylation is critical for pregenomic RNA packaging. Protein kinase C phosphorylation is stimulated by HBx protein and may play a role in transport of the viral genome to the nucleus at the late step during the viral replication cycle.

The protein localises to the virion. It is found in the host cytoplasm. Self assembles to form an icosahedral capsid. Most capsids appear to be large particles with an icosahedral symmetry of T=4 and consist of 240 copies of capsid protein, though a fraction forms smaller T=3 particles consisting of 180 capsid proteins. Entering capsids are transported along microtubules to the nucleus. Phosphorylation of the capsid is thought to induce exposure of nuclear localization signal in the C-terminal portion of the capsid protein that allows binding to the nuclear pore complex via the importin (karyopherin-) alpha and beta. Capsids are imported in intact form through the nuclear pore into the nuclear basket, where it probably binds NUP153. Only capsids that contain the mature viral genome can release the viral DNA and capsid protein into the nucleoplasm. Immature capsids get stuck in the basket. Capsids encapsulate the pre-genomic RNA and the P protein. Pre-genomic RNA is reverse-transcribed into DNA while the capsid is still in the cytoplasm. The capsid can then either be directed to the nucleus, providing more genomes for transcription, or bud through the endoplasmic reticulum to provide new virions. The sequence is that of Capsid protein from Hepatitis B virus genotype G (isolate United States/USG17/2002) (HBV-G).